Reading from the N-terminus, the 212-residue chain is Pyridoxine/pyridoxamine 5'-phosphate oxidase (212 aa).

FMN-binding positions include 61–66 (RTVLLK), 76–77 (FT), Lys82, Lys83, and Gln105. Lys66 contributes to the substrate binding site. Substrate is bound by residues Tyr123, Arg127, and Ser131. Residues 140 to 141 (QS) and Trp185 each bind FMN. Residue 191-193 (RLH) coordinates substrate. Arg195 contributes to the FMN binding site.

It belongs to the pyridoxamine 5'-phosphate oxidase family. Homodimer. FMN is required as a cofactor.

The enzyme catalyses pyridoxamine 5'-phosphate + O2 + H2O = pyridoxal 5'-phosphate + H2O2 + NH4(+). The catalysed reaction is pyridoxine 5'-phosphate + O2 = pyridoxal 5'-phosphate + H2O2. The protein operates within cofactor metabolism; pyridoxal 5'-phosphate salvage; pyridoxal 5'-phosphate from pyridoxamine 5'-phosphate: step 1/1. It functions in the pathway cofactor metabolism; pyridoxal 5'-phosphate salvage; pyridoxal 5'-phosphate from pyridoxine 5'-phosphate: step 1/1. In terms of biological role, catalyzes the oxidation of either pyridoxine 5'-phosphate (PNP) or pyridoxamine 5'-phosphate (PMP) into pyridoxal 5'-phosphate (PLP). In Vesicomyosocius okutanii subsp. Calyptogena okutanii (strain HA), this protein is Pyridoxine/pyridoxamine 5'-phosphate oxidase.